Reading from the N-terminus, the 119-residue chain is Putative yippee-like protein Os10g0369500 (119 aa).

Positions 21–118 constitute a Yippee domain; sequence AVLKCRRCRV…LEKARMWKEA (98 aa). Cys25, Cys28, Cys81, and Cys84 together coordinate Zn(2+).

The protein belongs to the yippee family.

The protein is Putative yippee-like protein Os10g0369500 of Oryza sativa subsp. japonica (Rice).